The following is a 286-amino-acid chain: 4-hydroxybenzoate octaprenyltransferase (286 aa).

7 helical membrane-spanning segments follow: residues 20-40 (IGTL…AGGM), 43-63 (LKVL…GCII), 96-116 (LFVV…PLVV), 142-162 (FLGV…TGTV), 167-187 (WWLF…YAMV), 210-230 (QVIA…GWAA), and 234-254 (LVYA…QKLI).

This sequence belongs to the UbiA prenyltransferase family. Mg(2+) serves as cofactor.

Its subcellular location is the cell inner membrane. It carries out the reaction all-trans-octaprenyl diphosphate + 4-hydroxybenzoate = 4-hydroxy-3-(all-trans-octaprenyl)benzoate + diphosphate. It functions in the pathway cofactor biosynthesis; ubiquinone biosynthesis. In terms of biological role, catalyzes the prenylation of para-hydroxybenzoate (PHB) with an all-trans polyprenyl group. Mediates the second step in the final reaction sequence of ubiquinone-8 (UQ-8) biosynthesis, which is the condensation of the polyisoprenoid side chain with PHB, generating the first membrane-bound Q intermediate 3-octaprenyl-4-hydroxybenzoate. In Shewanella woodyi (strain ATCC 51908 / MS32), this protein is 4-hydroxybenzoate octaprenyltransferase.